Reading from the N-terminus, the 500-residue chain is Prostacyclin synthase (500 aa).

The chain crosses the membrane as a helical span at residues 1-20 (MAWAALLGLLAALLLLLLLS). Substrate is bound by residues Arg106, Leu112, Asn287, 358–359 (TR), and Arg382. Residue Cys441 coordinates heme.

This sequence belongs to the cytochrome P450 family. Heme is required as a cofactor. In terms of tissue distribution, widely expressed; particularly abundant in ovary, heart, skeletal muscle, lung and prostate.

The protein localises to the endoplasmic reticulum membrane. The catalysed reaction is prostaglandin H2 = prostaglandin I2. The enzyme catalyses a hydroperoxyeicosatetraenoate = an oxoeicosatetraenoate + H2O. It catalyses the reaction (15S)-hydroperoxy-(5Z,8Z,11Z,13E)-eicosatetraenoate = 15-oxo-(5Z,8Z,11Z,13E)-eicosatetraenoate + H2O. It carries out the reaction (15S)-hydroperoxy-(5Z,8Z,11Z,13E)-eicosatetraenoate + AH2 = (15S)-hydroxy-(5Z,8Z,11Z,13E)-eicosatetraenoate + A + H2O. Catalyzes the biosynthesis and metabolism of eicosanoids. Catalyzes the isomerization of prostaglandin H2 to prostacyclin (= prostaglandin I2), a potent mediator of vasodilation and inhibitor of platelet aggregation. Additionally, displays dehydratase activity, toward hydroperoxyeicosatetraenoates (HPETEs), especially toward (15S)-hydroperoxy-(5Z,8Z,11Z,13E)-eicosatetraenoate (15(S)-HPETE). In Homo sapiens (Human), this protein is Prostacyclin synthase (PTGIS).